Here is a 920-residue protein sequence, read N- to C-terminus: Protein O-mannosyl-transferase TMTC3 (920 aa).

The Cytoplasmic segment spans residues 1–14 (MLEGKMADINFKEV). Residues 15–35 (TLIVSVVAACYWNSLFCGFVF) form a helical membrane-spanning segment. At 36-94 (DDVSAILDNKDLHPSTPLKTLFQNDFWGTPMSEERSHKSYRPLTVLTFRLNYLLSELKP) the chain is on the extracellular side. The chain crosses the membrane as a helical span at residues 95-115 (MSYHLLNTVFHAVVSVIFLKV). Topologically, residues 116 to 125 (CRLFLDKRSS) are cytoplasmic. 2 helical membrane passes run 126 to 144 (MIAALLFAVHPIHTEAVTG) and 145 to 163 (VVGRAELLSSVFFLAAFLS). At 164–171 (YTKSKGPD) the chain is on the cytoplasmic side. The chain crosses the membrane as a helical span at residues 172-192 (NSIVWTPIVLTVFLVAVATLC). The Extracellular segment spans residues 193–198 (KEQGIT). A helical transmembrane segment spans residues 199 to 219 (VVGICCVYEVFVAQGYTLPML). Over 220–236 (CTVAGQFLRGKGSIPLS) the chain is Cytoplasmic. A helical transmembrane segment spans residues 237 to 257 (MLQTLVKLIVLMLSTLLLVVV). Residues 258 to 325 (RVQVIQSQLP…LIESFLDVRN (68 aa)) lie on the Extracellular side of the membrane. Residues 326-346 (LATFAFFCFLGALGIFSLRYP) form a helical membrane-spanning segment. The Cytoplasmic portion of the chain corresponds to 347–358 (GDSSKTVLMALC). Residues 359 to 379 (LMALPFIPASNLFFPVGFVVA) traverse the membrane as a helical segment. The Extracellular portion of the chain corresponds to 380–381 (ER). A helical membrane pass occupies residues 382–402 (VLYVPSMGFCILVAHGWQKIS). The Cytoplasmic segment spans residues 403-409 (NKSVLKK). The helical transmembrane segment at 410 to 428 (LSWVCLSMVILTHALKTLH) threads the bilayer. The Extracellular segment spans residues 429-920 (RNWDWESEYT…EEIERILNGE (492 aa)). TPR repeat units lie at residues 451–484 (AKLWNNVGHALENEKNFEKALKYFLQATHVQPDD), 485–518 (IGAHMNVGRTYKNLNRSREAEASYMLAKSLMPQI), 534–567 (NVYINLANLIRANESRLEEADQLYRQAISMRPDF), 568–601 (KQAYISRGELLLKMNKPLKAKEAYLKALELDRNN), 602–635 (ADLWYNLAIVYIELKEPNEALKNFNRALELNPKH), 673–706 (ANGYFNLGMLAMDDKKDSEAESWMKKAIKLQPDF), 707–740 (RSALFNLALLYSQTAKELKALPILEELLKYYPDH), 742–775 (KGLILKGDILMNQKKDIPGAKKCFEKILEMDPSN), and 776–809 (VQGKHNLCVVYFEEKELLKAERCLVETLALAPHE). A glycan (N-linked (GlcNAc...) asparagine) is linked at N499. A Phosphotyrosine modification is found at Y508. N-linked (GlcNAc...) asparagine glycosylation is present at N546. A disordered region spans residues 829–897 (VEQPLAPADK…APHKTTKDIK (69 aa)). Over residues 840–858 (PGTEEREEIPSEDVKEISS) the composition is skewed to basic and acidic residues. Residues 867 to 880 (KTNNNRNSKSNKQS) are compositionally biased toward low complexity. Residues 887-897 (DAPHKTTKDIK) are compositionally biased toward basic and acidic residues.

The protein belongs to the TMTC family.

Its subcellular location is the membrane. The protein resides in the endoplasmic reticulum. The enzyme catalyses a di-trans,poly-cis-dolichyl beta-D-mannosyl phosphate + L-seryl-[protein] = 3-O-(alpha-D-mannosyl)-L-seryl-[protein] + a di-trans,poly-cis-dolichyl phosphate + H(+). The catalysed reaction is a di-trans,poly-cis-dolichyl beta-D-mannosyl phosphate + L-threonyl-[protein] = 3-O-(alpha-D-mannosyl)-L-threonyl-[protein] + a di-trans,poly-cis-dolichyl phosphate + H(+). It participates in protein modification; protein glycosylation. Its function is as follows. Transfers mannosyl residues to the hydroxyl group of serine or threonine residues. The 4 members of the TMTC family are O-mannosyl-transferases dedicated primarily to the cadherin superfamily, each member seems to have a distinct role in decorating the cadherin domains with O-linked mannose glycans at specific regions. Also acts as O-mannosyl-transferase on other proteins such as PDIA3. Involved in the positive regulation of proteasomal protein degradation in the endoplasmic reticulum (ER), and the control of ER stress response. The protein is Protein O-mannosyl-transferase TMTC3 of Mus musculus (Mouse).